A 959-amino-acid chain; its full sequence is Isoleucine--tRNA ligase (959 aa).

The short motif at 60 to 70 (PYANGSLHMGH) is the 'HIGH' region element. Position 569 (Glu569) interacts with L-isoleucyl-5'-AMP. Residues 610–614 (KMSKS) carry the 'KMSKS' region motif. An ATP-binding site is contributed by Lys613. The Zn(2+) site is built by Cys928, Cys931, Cys948, and Cys951.

It belongs to the class-I aminoacyl-tRNA synthetase family. IleS type 1 subfamily. In terms of assembly, monomer. Zn(2+) is required as a cofactor.

The protein resides in the cytoplasm. The catalysed reaction is tRNA(Ile) + L-isoleucine + ATP = L-isoleucyl-tRNA(Ile) + AMP + diphosphate. Its function is as follows. Catalyzes the attachment of isoleucine to tRNA(Ile). As IleRS can inadvertently accommodate and process structurally similar amino acids such as valine, to avoid such errors it has two additional distinct tRNA(Ile)-dependent editing activities. One activity is designated as 'pretransfer' editing and involves the hydrolysis of activated Val-AMP. The other activity is designated 'posttransfer' editing and involves deacylation of mischarged Val-tRNA(Ile). The sequence is that of Isoleucine--tRNA ligase from Gloeothece citriformis (strain PCC 7424) (Cyanothece sp. (strain PCC 7424)).